The chain runs to 263 residues: Hydroxyacylglutathione hydrolase (263 aa).

H56, H58, D60, H61, H115, D135, and H175 together coordinate Zn(2+).

This sequence belongs to the metallo-beta-lactamase superfamily. Glyoxalase II family. In terms of assembly, monomer. Zn(2+) is required as a cofactor.

The enzyme catalyses an S-(2-hydroxyacyl)glutathione + H2O = a 2-hydroxy carboxylate + glutathione + H(+). It functions in the pathway secondary metabolite metabolism; methylglyoxal degradation; (R)-lactate from methylglyoxal: step 2/2. Its function is as follows. Thiolesterase that catalyzes the hydrolysis of S-D-lactoyl-glutathione to form glutathione and D-lactic acid. The protein is Hydroxyacylglutathione hydrolase of Nitrosococcus oceani (strain ATCC 19707 / BCRC 17464 / JCM 30415 / NCIMB 11848 / C-107).